A 384-amino-acid chain; its full sequence is 23S rRNA (uracil(747)-C(5))-methyltransferase RlmC (384 aa).

Residues cysteine 7, cysteine 15, cysteine 18, and cysteine 94 each coordinate [4Fe-4S] cluster. Residues glutamine 219, phenylalanine 248, glutamate 269, and asparagine 316 each coordinate S-adenosyl-L-methionine. Residue cysteine 343 is the Nucleophile of the active site.

Belongs to the class I-like SAM-binding methyltransferase superfamily. RNA M5U methyltransferase family. RlmC subfamily.

The enzyme catalyses uridine(747) in 23S rRNA + S-adenosyl-L-methionine = 5-methyluridine(747) in 23S rRNA + S-adenosyl-L-homocysteine + H(+). Its function is as follows. Catalyzes the formation of 5-methyl-uridine at position 747 (m5U747) in 23S rRNA. This Shewanella sp. (strain ANA-3) protein is 23S rRNA (uracil(747)-C(5))-methyltransferase RlmC.